The chain runs to 594 residues: MKASTDHHVSGPPPVMIERVTRGGRRLFYRIDVIQQPEKCRACGSGPKSSTDRRPVDPPPVVELRIFEGPRFEEAKDITFTYNANFFLFATLEKARPMAHGRVTGPVVDAPPVLTGMPVSGMAYLDRPIEAGYFLFPDLSVRHEGTYRLSFNLYEETKDDRDKDMEPDEPSSEPQGFFYHRMEIKSADFACFSAKKFPGLGLSTPLSMTMAEQGTRVRIRRDVRMRRRDGKPSSGGGDFSSNSNNNAEDEAARRRRTRTPEPPAREDLRRSLSGTGDAPARNPEPQRRPSAADYRAPPPPNPPPPGFPSAQVPATSHLTFGGAPYGSHSQYQQPTSSSSSSEQVSSVPQSPAYSSHAAQQHYGQAPQPPTPTYPERRLSDHRSSQPNNHPQQSPHQHSYSHRSSPQRERFMPDSRRPSAPSHSHILSARPMTPQSANELRRPSDYNRPIPPPTDVLVADTQATPHLPPIRWPRPNMNLPSPPSEHQEALQPLQPAPLHYESQTHQQQLGGRKRTHDSYEEHSYSYGYSYSHNHSHGYGPTPSARPPAKNRKRPEDVEEKYTVTETMVVDRPEQFFPKPLKYVWTQCRAEPPPRE.

Positions 24–220 (GRRLFYRIDV…AEQGTRVRIR (197 aa)) constitute a Velvet domain. The Nuclear localization signal motif lies at 38–43 (EKCRAC). Disordered stretches follow at residues 40 to 59 (CRAC…VDPP) and 210 to 558 (MAEQ…DVEE). Over residues 217-229 (VRIRRDVRMRRRD) the composition is skewed to basic residues. Residues 296-307 (APPPPNPPPPGF) show a composition bias toward pro residues. A compositionally biased stretch (low complexity) spans 327–351 (SHSQYQQPTSSSSSSEQVSSVPQSP). Residues 352 to 362 (AYSSHAAQQHY) show a composition bias toward polar residues. Over residues 374-383 (PERRLSDHRS) the composition is skewed to basic and acidic residues. Positions 384–403 (SQPNNHPQQSPHQHSYSHRS) are enriched in low complexity. The span at 405-416 (PQRERFMPDSRR) shows a compositional bias: basic and acidic residues. The segment at 457–506 (VADTQATPHLPPIRWPRPNMNLPSPPSEHQEALQPLQPAPLHYESQTHQQ) is PEST. The segment covering 523 to 538 (YSYGYSYSHNHSHGYG) has biased composition (low complexity).

It belongs to the velvet family. VeA subfamily. As to quaternary structure, component of the heterotrimeric velvet complex composed of LAEA, VEA and VELB; VEA acting as a bridging protein between LAEA and VELB.

The protein localises to the nucleus. Its subcellular location is the cytoplasm. In terms of biological role, component of the velvet transcription factor complex that controls sexual/asexual developmental ratio in response to light, promoting sexual development in the darkness while stimulating asexual sporulation under illumination. The velvet complex acts as a global regulator for secondary metabolite gene expression. Regulates of the response to reactive oxygen species (ROS) stress. The protein is Developmental and secondary metabolism regulator veA of Pyricularia oryzae (strain 70-15 / ATCC MYA-4617 / FGSC 8958) (Rice blast fungus).